A 77-amino-acid chain; its full sequence is MKTLFFLSVFIFLLLHLSPGKMEILLGSNGGARCDINKKSFDCYHRNGRCRFNCRKREYNNGDCSQYQSCCLPTRNL.

The N-terminal stretch at 1-20 is a signal peptide; that stretch reads MKTLFFLSVFIFLLLHLSPG. 3 disulfide bridges follow: C43–C70, C50–C64, and C54–C71.

It belongs to the beta-defensin family. As to expression, lowly expressed in spleen, kidney and lung.

Its subcellular location is the secreted. Has antimicrobial activity. This chain is Defensin-B6, found in Ornithorhynchus anatinus (Duckbill platypus).